Reading from the N-terminus, the 199-residue chain is VAMP-like protein YKT61 (199 aa).

Positions 7–133 constitute a Longin domain; sequence LVLKCAPEAS…LTEALNKFQD (127 aa). Residues 139–199 form the v-SNARE coiled-coil homology domain; that stretch reads KLLKIQRELD…KKTNSCCTIL (61 aa). The S-palmitoyl cysteine moiety is linked to residue Cys-195. Residue Cys-196 is modified to Cysteine methyl ester. A lipid anchor (S-geranylgeranyl cysteine) is attached at Cys-196. Residues 197 to 199 constitute a propeptide, removed in mature form; that stretch reads TIL.

It belongs to the synaptobrevin family. In terms of assembly, interacts with SYP41. Core constituent of the SNARE complex required for membrane fusion at the trans-Golgi network. Expressed ubiquitously in roots, stems, flowers and leaves.

The protein localises to the cell membrane. Its function is as follows. May be involved in the secretory pathway. Essential for membrane fusion mediated by either SYP41 or SYP61; triggers the fusion of phospholipid vesicles containing SYP41 or SYP61 and VTI12. The protein is VAMP-like protein YKT61 of Arabidopsis thaliana (Mouse-ear cress).